The sequence spans 203 residues: Large ribosomal subunit protein uL13 (203 aa).

Position 2 is an N-acetylalanine (alanine 2). The residue at position 59 (arginine 59) is a Citrulline. Serine 77 carries the post-translational modification Phosphoserine; by ZIPK/DAPK3. The residue at position 140 (arginine 140) is a Citrulline. Position 191 is an N6-acetyllysine (lysine 191).

It belongs to the universal ribosomal protein uL13 family. As to quaternary structure, component of the 60S ribosome. Component of the GAIT complex. Interacts with EIF4G1. In terms of processing, phosphorylation at Ser-77 upon interferon-gamma treatment in macrophages involves a DAPK1-DAPK3 kinase cascade and is causing release from the ribosome, association with the GAIT complex and subsequent involvement in transcript-selective translation inhibition. Post-translationally, citrullinated by PADI4.

The protein localises to the cytoplasm. Functionally, associated with ribosomes but is not required for canonical ribosome function and has extra-ribosomal functions. Component of the GAIT (gamma interferon-activated inhibitor of translation) complex which mediates interferon-gamma-induced transcript-selective translation inhibition in inflammation processes. Upon interferon-gamma activation and subsequent phosphorylation dissociates from the ribosome and assembles into the GAIT complex which binds to stem loop-containing GAIT elements in the 3'-UTR of diverse inflammatory mRNAs (such as ceruplasmin) and suppresses their translation. In the GAIT complex interacts with m7G cap-bound eIF4G at or near the eIF3-binding site and blocks the recruitment of the 43S ribosomal complex. Involved in methylation of rRNA. The polypeptide is Large ribosomal subunit protein uL13 (Rpl13a) (Mus musculus (Mouse)).